The following is a 556-amino-acid chain: Putative cysteine ligase BshC (556 aa).

2 coiled-coil regions span residues 408 to 442 (ILQK…IAQA) and 468 to 513 (LGQV…ANLT).

It belongs to the BshC family.

Its function is as follows. Involved in bacillithiol (BSH) biosynthesis. May catalyze the last step of the pathway, the addition of cysteine to glucosamine malate (GlcN-Mal) to generate BSH. In Symbiobacterium thermophilum (strain DSM 24528 / JCM 14929 / IAM 14863 / T), this protein is Putative cysteine ligase BshC.